The chain runs to 239 residues: Ribosomal RNA small subunit methyltransferase A (239 aa).

S-adenosyl-L-methionine is bound by residues asparagine 23, isoleucine 25, glycine 50, glutamate 72, aspartate 97, and asparagine 116.

It belongs to the class I-like SAM-binding methyltransferase superfamily. rRNA adenine N(6)-methyltransferase family. RsmA subfamily.

The protein localises to the cytoplasm. It carries out the reaction adenosine(1518)/adenosine(1519) in 16S rRNA + 4 S-adenosyl-L-methionine = N(6)-dimethyladenosine(1518)/N(6)-dimethyladenosine(1519) in 16S rRNA + 4 S-adenosyl-L-homocysteine + 4 H(+). Its function is as follows. Specifically dimethylates two adjacent adenosines (A1518 and A1519) in the loop of a conserved hairpin near the 3'-end of 16S rRNA in the 30S particle. May play a critical role in biogenesis of 30S subunits. In Rickettsia felis (strain ATCC VR-1525 / URRWXCal2) (Rickettsia azadi), this protein is Ribosomal RNA small subunit methyltransferase A.